Consider the following 296-residue polypeptide: Phosphoribosylaminoimidazole-succinocarboxamide synthase (296 aa).

It belongs to the SAICAR synthetase family.

It carries out the reaction 5-amino-1-(5-phospho-D-ribosyl)imidazole-4-carboxylate + L-aspartate + ATP = (2S)-2-[5-amino-1-(5-phospho-beta-D-ribosyl)imidazole-4-carboxamido]succinate + ADP + phosphate + 2 H(+). Its pathway is purine metabolism; IMP biosynthesis via de novo pathway; 5-amino-1-(5-phospho-D-ribosyl)imidazole-4-carboxamide from 5-amino-1-(5-phospho-D-ribosyl)imidazole-4-carboxylate: step 1/2. The protein is Phosphoribosylaminoimidazole-succinocarboxamide synthase of Trichlorobacter lovleyi (strain ATCC BAA-1151 / DSM 17278 / SZ) (Geobacter lovleyi).